A 443-amino-acid chain; its full sequence is Adenylyltransferase and sulfurtransferase UBA4 (443 aa).

Residues Gly-81, Asp-102, 109-113 (SNLHR), Lys-126, and 170-171 (DS) each bind ATP. Residues Cys-212 and Cys-215 each coordinate Zn(2+). Cys-229 acts as the Glycyl thioester intermediate; for adenylyltransferase activity in catalysis. Zn(2+) contacts are provided by Cys-290 and Cys-293. The 100-residue stretch at 342–441 (KERGFVCLDV…YIDEINPSLP (100 aa)) folds into the Rhodanese domain. The active-site Cysteine persulfide intermediate; for sulfurtransferase activity is Cys-400.

The protein in the N-terminal section; belongs to the HesA/MoeB/ThiF family. UBA4 subfamily. Zn(2+) is required as a cofactor.

It localises to the cytoplasm. Its subcellular location is the cytosol. The protein operates within tRNA modification; 5-methoxycarbonylmethyl-2-thiouridine-tRNA biosynthesis. Functionally, plays a central role in 2-thiolation of mcm(5)S(2)U at tRNA wobble positions of cytosolic tRNA(Lys), tRNA(Glu) and tRNA(Gln). Acts by mediating the C-terminal thiocarboxylation of sulfur carrier URM1. Its N-terminus first activates URM1 as acyl-adenylate (-COAMP), then the persulfide sulfur on the catalytic cysteine is transferred to URM1 to form thiocarboxylation (-COSH) of its C-terminus. The reaction probably involves hydrogen sulfide that is generated from the persulfide intermediate and that acts as a nucleophile towards URM1. Subsequently, a transient disulfide bond is formed. Does not use thiosulfate as sulfur donor; NFS1 probably acting as a sulfur donor for thiocarboxylation reactions. Prior mcm(5) tRNA modification by the elongator complex is required for 2-thiolation. May also be involved in protein urmylation. The protein is Adenylyltransferase and sulfurtransferase UBA4 of Eremothecium gossypii (strain ATCC 10895 / CBS 109.51 / FGSC 9923 / NRRL Y-1056) (Yeast).